The sequence spans 87 residues: Large ribosomal subunit protein eL34 (87 aa).

This sequence belongs to the eukaryotic ribosomal protein eL34 family.

The polypeptide is Large ribosomal subunit protein eL34 (Sulfurisphaera tokodaii (strain DSM 16993 / JCM 10545 / NBRC 100140 / 7) (Sulfolobus tokodaii)).